A 662-amino-acid polypeptide reads, in one-letter code: Glycogen debranching enzyme (662 aa).

Catalysis depends on aspartate 338, which acts as the Nucleophile. The Proton donor role is filled by glutamate 373.

This sequence belongs to the glycosyl hydrolase 13 family.

The enzyme catalyses Hydrolysis of (1-&gt;6)-alpha-D-glucosidic linkages to branches with degrees of polymerization of three or four glucose residues in limit dextrin.. It functions in the pathway glycan degradation; glycogen degradation. Functionally, removes maltotriose and maltotetraose chains that are attached by 1,6-alpha-linkage to the limit dextrin main chain, generating a debranched limit dextrin. The sequence is that of Glycogen debranching enzyme from Yersinia pestis.